Here is a 580-residue protein sequence, read N- to C-terminus: TRAF-type zinc finger domain-containing protein 1 (580 aa).

A2 bears the N-acetylalanine mark. The segment at 27 to 103 (IHEIHCQRNI…DLELSVVKLK (77 aa)) adopts a TRAF-type zinc-finger fold. A phosphoserine mark is found at S278, S320, S326, S327, S409, S415, S430, S450, S469, and S532. Disordered stretches follow at residues 395-453 (TANH…SPNR), 468-509 (PSGP…ASGH), and 524-580 (FAPS…EEEE). Residues 407–417 (QDSQPENTSAE) show a composition bias toward polar residues.

In terms of assembly, interacts with MAVS, TICAM1, TRAF1, TRAF2, TRAF3 and TRAF6. In terms of tissue distribution, expressed in skeletal muscle, brain, liver, kidney, spleen and bone marrow. Expression depends on STAT1.

Its function is as follows. Negative feedback regulator that controls excessive innate immune responses. Regulates both Toll-like receptor 4 (TLR4) and DDX58/RIG1-like helicases (RLH) pathways. May inhibit the LTR pathway by direct interaction with TRAF6 and attenuation of NF-kappa-B activation. May negatively regulate the RLH pathway downstream from MAVS and upstream of NF-kappa-B and IRF3. The sequence is that of TRAF-type zinc finger domain-containing protein 1 (Trafd1) from Mus musculus (Mouse).